The chain runs to 27 residues: Nemertide alpha-8 (27 aa).

Intrachain disulfides connect C2–C16, C9–C20, and C15–C26.

The protein belongs to the nemertide family. In terms of tissue distribution, confined to the epidermis and to the mucus layer.

It is found in the secreted. Highly potent toxin against both insect and some mammalian sodium channels (Nav). It potently inhibits inactivation of insect sodium channels of B.germanica (BgNav1) and also delays the inactivation of mammalian Nav with potent activity on Nav1.3/SCN3A and Nav1.4/SCN4A. 1 uM is enough to completely inhibits the inactivation, resulting in sustained non-inactivating currents. In addition, the toxin significantly enhances the recovery from inactivation, and the open state is not required for the toxin to interact with the channel. In vivo, injection into brine shrimp (Artemia salina) stops movement or causes death after 24 hours (EC(50)=0.4 uM). The polypeptide is Nemertide alpha-8 (Riseriellus occultus (Ribbon worm)).